A 365-amino-acid chain; its full sequence is MLTRRNAKQSQRNSADQSLSEFNSSSMTHGSNQSVYHHNQHMDDSEMMMDEQDYSQYQMGFPEEDEMVEGMMTPRAVHQCNVCNKIFVSYKGLQQHAVIHTDQKPFRCDICSKSFRFKSNLFEHRSVHTGFTPHACPYCGKTCRLKGNLKKHLRTHVTTKEELEAAWRPFASNRRPPADIPDDAIVLRGAGGPYYTPPPRPKKKKLGLGEPEHWVDKLRRGDLLPQVELEDKIRRLEDTIFNNMSLERWGNLFEIAKSIAFETHDCPVCKSQFMTRMDCVSHHTLEHENHREGLEFFCEKCYRPFADEASYNQHMSYHTRVSSLIETGEIVPQPADPEILVPTNDEFQMLFGANFGQQMMEPQLI.

The disordered stretch occupies residues 1–36 (MLTRRNAKQSQRNSADQSLSEFNSSSMTHGSNQSVY). The segment covering 8-36 (KQSQRNSADQSLSEFNSSSMTHGSNQSVY) has biased composition (polar residues). C2H2-type zinc fingers lie at residues 78-100 (HQCN…AVIH), 106-128 (FRCD…RSVH), 134-156 (HACP…LRTH), 264-287 (HDCP…TLEH), and 296-318 (FFCE…MSYH).

It is found in the nucleus speckle. Functionally, involved in transcriptional regulation. Required to specify left-right asymmetry of the ASE gustatory neurons, probably acting upstream of microRNA lsy-6. Involved in maintaining the distinction between somatic and germ cells, perhaps acting by repressing germ cell-specific genes in somatic cells. The polypeptide is Zinc finger protein lsy-2 (Caenorhabditis elegans).